The following is a 260-amino-acid chain: Ribosomal RNA small subunit methyltransferase J (260 aa).

S-adenosyl-L-methionine contacts are provided by residues 125 to 126 (ER) and aspartate 179.

Belongs to the methyltransferase superfamily. RsmJ family.

The protein resides in the cytoplasm. The catalysed reaction is guanosine(1516) in 16S rRNA + S-adenosyl-L-methionine = N(2)-methylguanosine(1516) in 16S rRNA + S-adenosyl-L-homocysteine + H(+). Its function is as follows. Specifically methylates the guanosine in position 1516 of 16S rRNA. This chain is Ribosomal RNA small subunit methyltransferase J, found in Pseudomonas fluorescens (strain ATCC BAA-477 / NRRL B-23932 / Pf-5).